The primary structure comprises 250 residues: Flavin-dependent thymidylate synthase (250 aa).

The ThyX domain maps to 7–233 (LRVQLIAKTD…PAVFADFEIA (227 aa)). Residues Ser-71, 95 to 97 (RHR), and Gln-103 contribute to the FAD site. Residues 92–95 (ELIR), 103–107 (QLSQR), and Arg-172 contribute to the dUMP site. Residues 95 to 105 (RHRHFSYSQLS) carry the ThyX motif motif. Residues 188-190 (NYR) and His-194 each bind FAD. Arg-199 contacts dUMP. Arg-199 acts as the Involved in ionization of N3 of dUMP, leading to its activation in catalysis.

It belongs to the thymidylate synthase ThyX family. In terms of assembly, homotetramer. Requires FAD as cofactor.

It carries out the reaction dUMP + (6R)-5,10-methylene-5,6,7,8-tetrahydrofolate + NADPH + H(+) = dTMP + (6S)-5,6,7,8-tetrahydrofolate + NADP(+). It functions in the pathway pyrimidine metabolism; dTTP biosynthesis. Functionally, catalyzes the reductive methylation of 2'-deoxyuridine-5'-monophosphate (dUMP) to 2'-deoxythymidine-5'-monophosphate (dTMP) while utilizing 5,10-methylenetetrahydrofolate (mTHF) as the methyl donor, and NADPH and FADH(2) as the reductant. The chain is Flavin-dependent thymidylate synthase from Mycobacterium avium (strain 104).